Consider the following 496-residue polypeptide: uncharacterized protein (496 aa).

Positions 36, 81, 300, 302, 321, 323, and 375 each coordinate Mg(2+).

The protein belongs to the XPG/RAD2 endonuclease family. FEN1 subfamily. The cofactor is Mg(2+).

This is an uncharacterized protein from Schizosaccharomyces pombe (strain 972 / ATCC 24843) (Fission yeast).